Reading from the N-terminus, the 386-residue chain is Homoserine O-succinyltransferase (386 aa).

Residues 49–358 enclose the AB hydrolase-1 domain; it reads NAILICHALS…DAEQGHDSFL (310 aa). Residue Ser-156 is the Nucleophile of the active site. A substrate-binding site is contributed by Arg-226. Catalysis depends on residues Asp-321 and His-354. A substrate-binding site is contributed by Asp-355.

This sequence belongs to the AB hydrolase superfamily. MetX family. In terms of assembly, homodimer.

It is found in the cytoplasm. The catalysed reaction is L-homoserine + succinyl-CoA = O-succinyl-L-homoserine + CoA. It participates in amino-acid biosynthesis; L-methionine biosynthesis via de novo pathway; O-succinyl-L-homoserine from L-homoserine: step 1/1. In terms of biological role, transfers a succinyl group from succinyl-CoA to L-homoserine, forming succinyl-L-homoserine. The sequence is that of Homoserine O-succinyltransferase from Acinetobacter baumannii (strain AB307-0294).